Consider the following 121-residue polypeptide: Large ribosomal subunit protein uL14 (121 aa).

This sequence belongs to the universal ribosomal protein uL14 family. Part of the 50S ribosomal subunit. Forms a cluster with proteins L3 and L19. In the 70S ribosome, L14 and L19 interact and together make contacts with the 16S rRNA in bridges B5 and B8.

In terms of biological role, binds to 23S rRNA. Forms part of two intersubunit bridges in the 70S ribosome. The protein is Large ribosomal subunit protein uL14 of Synechococcus sp. (strain CC9902).